The following is a 924-amino-acid chain: DNA repair and recombination protein RDH54 (924 aa).

Residues 1–10 (MQIPKYENKP) are compositionally biased toward basic and acidic residues. 2 disordered regions span residues 1–21 (MQIP…GSNK) and 155–182 (EALS…KNDG). A compositionally biased stretch (low complexity) spans 168-178 (TTSTTETVPST). Positions 299-487 (LENDSDISGC…FTIIDFINPG (189 aa)) constitute a Helicase ATP-binding domain. 346–353 (IPLTGLCK) lines the ATP pocket. The DEGH box motif lies at 472–475 (NDLN). K615 is covalently cross-linked (Glycyl lysine isopeptide (Lys-Gly) (interchain with G-Cter in ubiquitin)). In terms of domain architecture, Helicase C-terminal spans 631 to 790 (KLRVLMTLLE…DSEMRNKESS (160 aa)).

This sequence belongs to the SNF2/RAD54 helicase family. In terms of assembly, interacts with RAD51 and DMC1.

Its subcellular location is the nucleus. It carries out the reaction ATP + H2O = ADP + phosphate + H(+). Its function is as follows. Involved in the recombinational repair of double-strand breaks (DSB) in DNA during mitosis and meiosis. Has DNA dependent ATPase activity. Promotes D-loop (displacement loop) formation with RAD51 recombinase. Modifies the topology of double-stranded DNA during the D-loop reaction to facilitate the invasion of the homologous duplex molecule by the initiating single-stranded DNA substrate. Required for adaptation from G2/M checkpoint arrest induced by a double strand break, by participating in monitoring the extent of single-stranded DNA produced by resection of DNA ends. This role is distinct from its roles in recombination. Promotes colocalization of RAD51 and DMC1 during meiotic recombination. Involved in crossover interference. The protein is DNA repair and recombination protein RDH54 (RDH54) of Saccharomyces cerevisiae (strain AWRI1631) (Baker's yeast).